Reading from the N-terminus, the 714-residue chain is MDSSLDGAAGDSSKCSEMSVDEKRQLVYELSKQSHLAAEVLQAWSRQEILQILCAEMGKERKYTGLTKVKIIETLLKIVSEKNSGECEGKKRDSDCLPIQRNTKRQRKVDNPSRYVIPATNIVTSNNASGSCSSVNTKGESTTIYCKNLACRAVLRQEDSFCRRCSCCICRKYDDNKDPSLWLTCSSDPPFEGESCGFSCHLECAFNTEKSGLGKDKQSEGCCFYCVSCGKANSLLECWKKQLTIAKETRRVEVLCYRLFLVQKLLKSSTKYRNLCEVVDEAVKTLEADVGPLTGLPMKMGRGIVNRLHSGPDVQKLCSSALESLETIATTPPDVAALPSPRSSKMQQDCSYVLSNEISADTATTGSTKIRFEDVNATSLTVVLASNEIPSPPNIVHYSIWHRKVPEKDYPEKSTCTLFIPNTRFVVSGLAPASEYCFKVVSYSGTREMGVDEINVLTRSAEEGANCSSAVERSVSPLTNCSTLSSNPSSVEAESNNDYIVPKKPSSKNEDNNSPSVDESAAKRMKRTTDSDIVQIEKDVEQIVLLDDEEQEAVLDKTESETPVVVTTKSLVGNRNSSDASLPITPFRSDEIKNRQARIEISMKDNCNNGDHSANGGTESGLEHCVKIIRQLECSGHIDKNFRQKFLTWYSLRATSQEIRVVKIFIDTFIDDPMALAEQLIDTFDDRVSIKRSAVGGSGASAVVPSGFCMKLWH.

A PHD-type zinc finger spans residues 164–232; it reads RCSCCICRKY…CFYCVSCGKA (69 aa). Residues 239–246 carry the Nuclear localization signal motif; it reads WKKQLTIA. Positions 366–463 constitute a Fibronectin type-III domain; sequence GSTKIRFEDV…INVLTRSAEE (98 aa). The span at 478–498 shows a compositional bias: polar residues; that stretch reads LTNCSTLSSNPSSVEAESNND. Residues 478–530 form a disordered region; the sequence is LTNCSTLSSNPSSVEAESNNDYIVPKKPSSKNEDNNSPSVDESAAKRMKRTTD. Positions 602-714 are VIN3-Interacting Domain (VID); that stretch reads SMKDNCNNGD…PSGFCMKLWH (113 aa).

As to quaternary structure, self-interacts. Interacts with VIN3 and VIL1. Component of the plant homeodomain / polycomb repressive complex 2 (PHD-PRC2) large complex during prolonged cold, composed of core PRC2 components (VRN2, EZA1, FIE and MSI1), and three related PHD finger proteins (VIL1, VIL2 and VIN3) that mediates histone H3 trimethylation on 'Lys-27' (H3K27me3).

Its subcellular location is the nucleus. Maybe involved in both the vernalization and photoperiod pathways by regulating gene expression. Binds preferentially to dimethylated histone H3 'Lys-9' (H3K9me2). Promotes flowering in non-inductive photoperiods (e.g. short days) through the maintenance of the epigenetically repressed state of MAF5 via H3K9me2 and plant homeodomain / polycomb repressive complex 2 (PHD-PRC2)-dependent H3K27me3. The protein is VIN3-like protein 2 (VIL2) of Arabidopsis thaliana (Mouse-ear cress).